A 461-amino-acid polypeptide reads, in one-letter code: Fibrinogen C domain-containing protein 1 (461 aa).

The disordered stretch occupies residues 1–24 (MVNDRWKTMGGAAQLEDRPRDKPQ). Over 1–33 (MVNDRWKTMGGAAQLEDRPRDKPQRPSCGYVLC) the chain is Cytoplasmic. Residues 15-24 (LEDRPRDKPQ) are compositionally biased toward basic and acidic residues. A helical; Signal-anchor for type II membrane protein transmembrane segment spans residues 34–54 (TVLLALAVLLAVAVTGAVLFL). Over 55–461 (NHAHAPGTAP…MKIRPVREDR (407 aa)) the chain is Extracellular. The disordered stretch occupies residues 214–238 (GRPRNKADLQRAPARGTRPRGCATG). Residues 235 to 458 (CATGSRPRDC…FSEMKIRPVR (224 aa)) form the Fibrinogen C-terminal domain. Cys-244 and Cys-273 are joined by a disulfide. The N-linked (GlcNAc...) asparagine glycan is linked to Asn-340. Positions 393 and 395 each coordinate Ca(2+). The cysteines at positions 401 and 414 are disulfide-linked.

Homotetramer; disulfide-linked. In terms of tissue distribution, expressed in the small and large intestinal epithelial cells with a highly polarized localization to the apical surface corresponding to the brush border and in the ducts of the salivary gland.

Its subcellular location is the membrane. Functionally, acetyl group-binding receptor which shows a high-affinity and calcium-dependent binding to acetylated structures such as chitin, some N-acetylated carbohydrates, and amino acids, but not to their non-acetylated counterparts. Can facilitate the endocytosis of acetylated components. The protein is Fibrinogen C domain-containing protein 1 (FIBCD1) of Homo sapiens (Human).